We begin with the raw amino-acid sequence, 354 residues long: Glycerol-1-phosphate dehydrogenase [NAD(P)+] (354 aa).

NAD(+)-binding positions include 102–106 (GRSID) and 124–127 (TAAS). Residue Asp-129 coordinates substrate. NAD(+) is bound at residue Ser-133. Residue Asp-176 coordinates substrate. 2 residues coordinate Zn(2+): Asp-176 and His-256. His-260 is a binding site for substrate. His-272 is a binding site for Zn(2+).

Belongs to the glycerol-1-phosphate dehydrogenase family. Zn(2+) is required as a cofactor.

It is found in the cytoplasm. The enzyme catalyses sn-glycerol 1-phosphate + NAD(+) = dihydroxyacetone phosphate + NADH + H(+). It carries out the reaction sn-glycerol 1-phosphate + NADP(+) = dihydroxyacetone phosphate + NADPH + H(+). It functions in the pathway membrane lipid metabolism; glycerophospholipid metabolism. In terms of biological role, catalyzes the NAD(P)H-dependent reduction of dihydroxyacetonephosphate (DHAP or glycerone phosphate) to glycerol 1-phosphate (G1P). The G1P thus generated is used as the glycerophosphate backbone of phospholipids in the cellular membranes of Archaea. The protein is Glycerol-1-phosphate dehydrogenase [NAD(P)+] of Methanothrix thermoacetophila (strain DSM 6194 / JCM 14653 / NBRC 101360 / PT) (Methanosaeta thermophila).